A 419-amino-acid chain; its full sequence is Cyclin-B2-2 (419 aa).

The interval 79-116 (QPSSAPLAPIGSERQKRTADSAFHGPADMECTKITSDD) is disordered.

It belongs to the cyclin family. Cyclin AB subfamily. As to quaternary structure, interacts with CDKB2-1. In terms of tissue distribution, expressed in the intercalary meristem and the elongation zone of internodes. Expressed in adventitious roots at all nodes under submergence conditions.

It is found in the nucleus. Its function is as follows. Involved in the control of the cell cycle at the G2/M (mitosis) transition. May associate to CDKB2-1 and activate CDKB2-1 kinase to promote cell division. The sequence is that of Cyclin-B2-2 (CYCB2-2) from Oryza sativa subsp. indica (Rice).